The sequence spans 188 residues: Peptidyl-tRNA hydrolase (188 aa).

Residue tyrosine 14 coordinates tRNA. Histidine 19 (proton acceptor) is an active-site residue. TRNA-binding residues include tyrosine 64, asparagine 66, and asparagine 112.

The protein belongs to the PTH family. Monomer.

It is found in the cytoplasm. It carries out the reaction an N-acyl-L-alpha-aminoacyl-tRNA + H2O = an N-acyl-L-amino acid + a tRNA + H(+). Its function is as follows. Hydrolyzes ribosome-free peptidyl-tRNAs (with 1 or more amino acids incorporated), which drop off the ribosome during protein synthesis, or as a result of ribosome stalling. In terms of biological role, catalyzes the release of premature peptidyl moieties from peptidyl-tRNA molecules trapped in stalled 50S ribosomal subunits, and thus maintains levels of free tRNAs and 50S ribosomes. The chain is Peptidyl-tRNA hydrolase from Bacillus licheniformis (strain ATCC 14580 / DSM 13 / JCM 2505 / CCUG 7422 / NBRC 12200 / NCIMB 9375 / NCTC 10341 / NRRL NRS-1264 / Gibson 46).